The sequence spans 311 residues: Olfactory receptor 287 (311 aa).

Topologically, residues 1-27 are extracellular; sequence MAWSTGQNLSTPGPFILLGFPGPRSMR. N-linked (GlcNAc...) asparagine glycosylation occurs at asparagine 8. Residues 28 to 53 traverse the membrane as a helical segment; that stretch reads IGLFLLFLVMYLLTVVGNLAIISLVG. Residues 54–60 are Cytoplasmic-facing; the sequence is AHRCLQT. Residues 61 to 82 form a helical membrane-spanning segment; the sequence is PMYFFLCNLSFLEIWFTTACVP. Residues 83 to 103 lie on the Extracellular side of the membrane; sequence KTLATFAPRGGVISLAGCATQ. Cysteine 100 and cysteine 192 are disulfide-bonded. The helical transmembrane segment at 104–123 threads the bilayer; it reads MYFVFSLGCTEYFLLAVMAY. At 124–142 the chain is on the cytoplasmic side; sequence DRYLAICLPLRYGGIMTPG. The chain crosses the membrane as a helical span at residues 143-161; that stretch reads LAMRLALGSWLCGFSAITV. The Extracellular segment spans residues 162-199; sequence PATLIARLSFCGSRVINHFFCDISPWIVLSCTDTQVVE. The chain crosses the membrane as a helical span at residues 200 to 222; it reads LVSFGIAFCVILGSCGITLVSYA. Residues 223-239 lie on the Cytoplasmic side of the membrane; it reads YIITTIIKIPSARGRHR. A helical transmembrane segment spans residues 240–263; it reads AFSTCSSHLTVVLIWYGSTIFLHV. At 264-275 the chain is on the extracellular side; it reads RTSVESSLDLTK. Residues 276 to 295 form a helical membrane-spanning segment; that stretch reads AITVLNTIVTPVLNPFIYTL. Residues 296 to 311 are Cytoplasmic-facing; sequence RNKDVKEALRRTVKGK.

Belongs to the G-protein coupled receptor 1 family. As to expression, olfactory epithelium.

Its subcellular location is the cell membrane. In terms of biological role, odorant receptor. This is Olfactory receptor 287 (Olr287) from Rattus norvegicus (Rat).